Here is a 445-residue protein sequence, read N- to C-terminus: Tubulin beta chain (445 aa).

GTP-binding residues include Q11, E69, S138, G142, T143, G144, N204, and N226. Mg(2+) is bound at residue E69.

Belongs to the tubulin family. In terms of assembly, dimer of alpha and beta chains. A typical microtubule is a hollow water-filled tube with an outer diameter of 25 nm and an inner diameter of 15 nM. Alpha-beta heterodimers associate head-to-tail to form protofilaments running lengthwise along the microtubule wall with the beta-tubulin subunit facing the microtubule plus end conferring a structural polarity. Microtubules usually have 13 protofilaments but different protofilament numbers can be found in some organisms and specialized cells. Mg(2+) is required as a cofactor.

The protein resides in the cytoplasm. The protein localises to the cytoskeleton. Functionally, tubulin is the major constituent of microtubules, a cylinder consisting of laterally associated linear protofilaments composed of alpha- and beta-tubulin heterodimers. Microtubules grow by the addition of GTP-tubulin dimers to the microtubule end, where a stabilizing cap forms. Below the cap, tubulin dimers are in GDP-bound state, owing to GTPase activity of alpha-tubulin. This is Tubulin beta chain from Leishmania mexicana.